The primary structure comprises 701 residues: Glycine--tRNA ligase beta subunit (701 aa).

This sequence belongs to the class-II aminoacyl-tRNA synthetase family. As to quaternary structure, tetramer of two alpha and two beta subunits.

It is found in the cytoplasm. The enzyme catalyses tRNA(Gly) + glycine + ATP = glycyl-tRNA(Gly) + AMP + diphosphate. The chain is Glycine--tRNA ligase beta subunit from Helicobacter pylori (strain G27).